The sequence spans 201 residues: Small ribosomal subunit protein uS4 (201 aa).

The S4 RNA-binding domain maps to 91 to 157; it reads SRLDNVVYRA…VPFQIARETA (67 aa).

This sequence belongs to the universal ribosomal protein uS4 family. As to quaternary structure, part of the 30S ribosomal subunit. Contacts protein S5. The interaction surface between S4 and S5 is involved in control of translational fidelity.

One of the primary rRNA binding proteins, it binds directly to 16S rRNA where it nucleates assembly of the body of the 30S subunit. In terms of biological role, with S5 and S12 plays an important role in translational accuracy. The polypeptide is Small ribosomal subunit protein uS4 (Mycolicibacterium paratuberculosis (strain ATCC BAA-968 / K-10) (Mycobacterium paratuberculosis)).